The following is a 205-amino-acid chain: Methylamine utilization protein MauD (205 aa).

The chain crosses the membrane as a helical span at residues 5 to 25 (FLIASNVLLWLALIGCAVLML). A Thioredoxin domain is found at 50–184 (PDVGDAAPTF…LESLLEADKS (135 aa)).

Its subcellular location is the membrane. It participates in one-carbon metabolism; methylamine degradation. Functionally, may be specifically involved in the processing, transport, and/or maturation of the MADH beta-subunit. In Methylorubrum extorquens (strain ATCC 14718 / DSM 1338 / JCM 2805 / NCIMB 9133 / AM1) (Methylobacterium extorquens), this protein is Methylamine utilization protein MauD (mauD).